Here is a 774-residue protein sequence, read N- to C-terminus: Ent-beyerene synthase KSL4, chloroplastic (774 aa).

A chloroplast-targeting transit peptide spans 1–35 (MLLGSTNTLRISSHGKEWEGKTLTGMPLGKVNQRV). Asp-525, Asp-529, Asn-668, Asp-669, Thr-672, and Glu-676 together coordinate Mg(2+). Positions 525 to 529 (DDFFD) match the DDXXD motif motif.

The protein belongs to the terpene synthase family. It depends on Mg(2+) as a cofactor.

The protein localises to the plastid. It localises to the chloroplast. It catalyses the reaction ent-copalyl diphosphate = ent-beyerene + diphosphate. The catalysed reaction is ent-copalyl diphosphate = ent-atiserene + diphosphate. The enzyme catalyses ent-copalyl diphosphate = ent-kaur-16-ene + diphosphate. It participates in secondary metabolite biosynthesis; terpenoid biosynthesis. In terms of biological role, diterpene cyclase involved in the biosynthesis of labdane-related diterpenoids (LRDs) natural products. Catalyzes the cyclization of ent-CDP into ent-beyerene as a major and ent-kaurene and ent-atiserene as minor products. This is Ent-beyerene synthase KSL4, chloroplastic from Ricinus communis (Castor bean).